The following is a 92-amino-acid chain: DNA-binding protein HU (92 aa).

The protein belongs to the bacterial histone-like protein family. In terms of assembly, homodimer.

Histone-like DNA-binding protein which is capable of wrapping DNA to stabilize it, and thus to prevent its denaturation under extreme environmental conditions. The protein is DNA-binding protein HU (hup) of Buchnera aphidicola subsp. Acyrthosiphon pisum (strain APS) (Acyrthosiphon pisum symbiotic bacterium).